The sequence spans 383 residues: Na(+)/H(+) antiporter NhaA (383 aa).

11 helical membrane passes run 14–34 (AGGI…NSPL), 47–67 (FGMS…FLLI), 87–107 (IFPA…YVAF), 117–137 (GWAI…ALLG), 146–166 (VFLL…IALF), 171–191 (LSTM…MLNA), 205–225 (AILW…GVVI), 252–272 (VAFG…LEGV), 280–300 (MLPL…IFTF), 321–341 (IFAV…ISSL), and 356–376 (LGIL…LHFS).

It belongs to the NhaA Na(+)/H(+) (TC 2.A.33) antiporter family.

It localises to the cell inner membrane. The enzyme catalyses Na(+)(in) + 2 H(+)(out) = Na(+)(out) + 2 H(+)(in). Na(+)/H(+) antiporter that extrudes sodium in exchange for external protons. This Vibrio alginolyticus protein is Na(+)/H(+) antiporter NhaA.